A 234-amino-acid polypeptide reads, in one-letter code: Sugar fermentation stimulation protein homolog (234 aa).

Belongs to the SfsA family.

This Shewanella sp. (strain MR-4) protein is Sugar fermentation stimulation protein homolog.